Here is a 214-residue protein sequence, read N- to C-terminus: Cytolysin tenebrosin-B (214 aa).

Positions 1-19 (MNRLIIVFIVVTMICAATA) are cleaved as a signal peptide. Positions 20–35 (LSTKRRINKEEKDEKR) are excised as a propeptide. Residues 38–47 (AVAGAVIEGA) are plays an important role in the hemolytic activity. Residues 46-65 (GATLTFNVLQTVLKALGDIS) form an N-terminal region region. Phosphocholine contacts are provided by Ser-89, Val-122, Ser-140, Pro-142, Tyr-168, Tyr-172, and Tyr-173. The tract at residues 140-155 (SIPFDYNLYSNWWNVK) is trp-rich region, which is important for the binding to lipid membrane. Positions 179 to 181 (RGD) match the Cell attachment site, crucial for protein stability motif.

Belongs to the actinoporin family. Sea anemone subfamily. As to quaternary structure, octamer or nonamer in membranes. Monomer in the soluble state.

The protein resides in the secreted. The protein localises to the nematocyst. It is found in the target cell membrane. Functionally, pore-forming protein that forms cations-selective hydrophilic pores of around 1 nm and causes cardiac stimulation and cytolysis. Pore formation is a multi-step process that involves specific recognition of membrane sphingomyelin (but neither cholesterol nor phosphatidylcholine) using aromatic rich region and adjacent phosphocholine (POC) binding site, firm binding to the membrane (mainly driven by hydrophobic interactions) accompanied by the transfer of the N-terminal region to the lipid-water interface and finally pore formation after oligomerization of monomers. This is Cytolysin tenebrosin-B from Actinia tenebrosa (Australian red waratah sea anemone).